The primary structure comprises 248 residues: Small ribosomal subunit protein uS2c (248 aa).

Belongs to the universal ribosomal protein uS2 family.

The protein resides in the plastid. It localises to the chloroplast. In Trachelium caeruleum (Blue throatwort), this protein is Small ribosomal subunit protein uS2c (rps2).